The following is a 512-amino-acid chain: Tyrosine-protein kinase Lyn (512 aa).

The tract at residues 1-45 is disordered; sequence MGCIKSKRKDNLNDDEVDSKTQPVRNTDRTIYVRDPTSNKQQRPV. Glycine 2 is lipidated: N-myristoyl glycine. Cysteine 3 carries S-palmitoyl cysteine lipidation. Residue serine 19 is modified to Phosphoserine. The SH3 domain occupies 63–123; it reads EQGDIVVALY…PSNYVAKVNT (61 aa). Positions 129 to 226 constitute an SH2 domain; the sequence is WFFKDITRKD…GLCRRLEKAC (98 aa). The residue at position 193 (tyrosine 193) is a Phosphotyrosine. Serine 228 carries the phosphoserine modification. The Protein kinase domain occupies 247-501; it reads IKLVKKLGAG…YLQSVLDDFY (255 aa). ATP-binding positions include 253-261 and lysine 275; that span reads LGAGQFGEV. Phosphotyrosine is present on residues tyrosine 306 and tyrosine 316. The active-site Proton acceptor is the aspartate 367. Tyrosine 397 carries the phosphotyrosine; by autocatalysis modification. 2 positions are modified to phosphotyrosine: tyrosine 460 and tyrosine 473. A Phosphotyrosine; by autocatalysis, CSK and MATK modification is found at tyrosine 508.

Belongs to the protein kinase superfamily. Tyr protein kinase family. SRC subfamily. In terms of assembly, interacts with TEC. Interacts (via SH2 domain) with FLT3 (tyrosine phosphorylated). Interacts with LIME1 and with CD79A upon activation of the B-cell antigen receptor. Interacts with the B-cell receptor complex. Interacts with phosphorylated THEMIS2. Interacts with EPOR. Interacts with MS4A2/FCER1B. Interaction (via the SH2 and SH3 domains) with MUC1 is stimulated by IL7 and the subsequent phosphorylation increases the binding between MUC1 and CTNNB1/beta-catenin. Interacts with ADAM15. Interacts with NDFIP2 and more weakly with NDFIP1. Interacts with FASLG. Interacts with KIT. Interacts with HCLS1. Interacts with FCGR2B. Interacts with FCGR1A; the interaction may be indirect. Interacts with CD19, CD22, CD79A and CD79B. Interacts (via SH3 domain) with CBLC, PPP1R15A and PDE4A. Interacts with TGFB1I1. Interacts (via SH3 domain) with PIK3R1, the regulatory subunit of phosphatidylinositol 3-kinase; this interaction enhances phosphatidylinositol 3-kinase activity. Interacts with CSF2RB, the common subunit of the IL3, IL5 and CSF2 receptors. Interacts with PAG1; identified in a complex with PAG1 and STAT3. Interacts with ABL1. Interacts with PTPN6/SHP-1. Interacts (via SH3 domain) with SCIMP (via proline-rich region). This interaction facilitates the phosphorylation of SCIMP on 'Tyr-96', which enhances binding of SCIMP to TLR4, and consequently the phosphorylation of TLR4 in response to stimulation by lipopolysaccharide in macrophages. Interacts with LPXN (via LD motif 3) and the interaction is induced upon B-cell antigen receptor (BCR) activation. Interacts (via SH3-domain) with ANKRD54 (via ankyrin repeat region) in an activation-independent status of LYN. Forms a multiprotein complex with ANKRD54 and HCLS1. Interacts (via SH2 and SH3 domains) with UNC119; leading to LYN activation. Interacts with CD36. Interacts with LYN. Interacts with SKAP1 and FYB1; this interaction promotes the phosphorylation of CLNK. Interacts with BCAR1/CAS and NEDD9/HEF1. Ubiquitinated by CBL, leading to its degradation. In terms of processing, autophosphorylated. Phosphorylated on tyrosine residues in response to KIT signaling. Phosphorylation at Tyr-397 is required for optimal activity. Phosphorylation at Tyr-508 inhibits kinase activity. Phosphorylated at Tyr-508 by CSK. Dephosphorylated by PTPRC/CD45. Becomes rapidly phosphorylated upon activation of the B-cell receptor and the immunoglobulin receptor FCGR1A. Phosphorylated in response to ITGB1 in B-cells. In terms of tissue distribution, detected in bone marrow-derived monocytes and macrophages (at protein level). Expressed predominantly in B-lymphoid and myeloid cells.

It is found in the cell membrane. The protein localises to the nucleus. Its subcellular location is the cytoplasm. It localises to the perinuclear region. The protein resides in the golgi apparatus. It is found in the membrane. The catalysed reaction is L-tyrosyl-[protein] + ATP = O-phospho-L-tyrosyl-[protein] + ADP + H(+). Its activity is regulated as follows. Subject to autoinhibition, mediated by intramolecular interactions between the SH2 domain and the C-terminal phosphotyrosine. Phosphorylation at Tyr-397 is required for optimal activity. Phosphorylated by CSK at Tyr-508; phosphorylation at Tyr-508 inhibits kinase activity. Kinase activity is modulated by dephosphorylation by PTPRC/CD45. Inhibited by dasatinib, PP2, and SU6656. Functionally, non-receptor tyrosine-protein kinase that transmits signals from cell surface receptors and plays an important role in the regulation of innate and adaptive immune responses, hematopoiesis, responses to growth factors and cytokines, integrin signaling, but also responses to DNA damage and genotoxic agents. Functions primarily as negative regulator, but can also function as activator, depending on the context. Required for the initiation of the B-cell response, but also for its down-regulation and termination. Plays an important role in the regulation of B-cell differentiation, proliferation, survival and apoptosis, and is important for immune self-tolerance. Acts downstream of several immune receptors, including the B-cell receptor, CD79A, CD79B, CD5, CD19, CD22, FCER1, FCGR2, FCGR1A, TLR2 and TLR4. Plays a role in the inflammatory response to bacterial lipopolysaccharide. Mediates the responses to cytokines and growth factors in hematopoietic progenitors, platelets, erythrocytes, and in mature myeloid cells, such as dendritic cells, neutrophils and eosinophils. Acts downstream of EPOR, KIT, MPL, the chemokine receptor CXCR4, as well as the receptors for IL3, IL5 and CSF2. Plays an important role in integrin signaling. Regulates cell proliferation, survival, differentiation, migration, adhesion, degranulation, and cytokine release. Involved in the regulation of endothelial activation, neutrophil adhesion and transendothelial migration. Down-regulates signaling pathways by phosphorylation of immunoreceptor tyrosine-based inhibitory motifs (ITIM), that then serve as binding sites for phosphatases, such as PTPN6/SHP-1, PTPN11/SHP-2 and INPP5D/SHIP-1, that modulate signaling by dephosphorylation of kinases and their substrates. Phosphorylates LIME1 in response to CD22 activation. Phosphorylates BTK, CBL, CD5, CD19, CD72, CD79A, CD79B, CSF2RB, DOK1, HCLS1, MS4A2/FCER1B, SYK and TEC. Phosphorylates PIRB at Tyr-794 and Tyr-824, which is required for PIRB interaction with PTPN6/SHP-1 and PTPN11/SHP-2. Promotes phosphorylation of SIRPA, PTPN6/SHP-1, PTPN11/SHP-2 and INPP5D/SHIP-1. Required for rapid phosphorylation of FER in response to FCER1 activation. Mediates KIT phosphorylation. Acts as an effector of EPOR (erythropoietin receptor) in controlling KIT expression and may play a role in erythroid differentiation during the switch between proliferation and maturation. Depending on the context, activates or inhibits several signaling cascades. Regulates phosphatidylinositol 3-kinase activity and AKT1 activation. Regulates activation of the MAP kinase signaling cascade, including activation of MAP2K1/MEK1, MAPK1/ERK2, MAPK3/ERK1, MAPK8/JNK1 and MAPK9/JNK2. Mediates activation of STAT5A and/or STAT5B. Phosphorylates LPXN on 'Tyr-72'. Kinase activity facilitates TLR4-TLR6 heterodimerization and signal initiation. Phosphorylates SCIMP on 'Tyr-96'; this enhances binding of SCIMP to TLR4, promoting the phosphorylation of TLR4, and a selective cytokine response to lipopolysaccharide in macrophages. Phosphorylates CLNK. Phosphorylates BCAR1/CAS and NEDD9/HEF1. The protein is Tyrosine-protein kinase Lyn (Lyn) of Mus musculus (Mouse).